We begin with the raw amino-acid sequence, 308 residues long: GTP-binding protein RAD (308 aa).

A compositionally biased stretch (gly residues) spans 1 to 16; that stretch reads MTLNGGGSGAGGSRGG. The disordered stretch occupies residues 1–88; it reads MTLNGGGSGA…SLSSGGSDSD (88 aa). Omega-N-methylarginine is present on Arg-24. Position 26 is a phosphoserine (Ser-26). Residues 48 to 68 are compositionally biased toward low complexity; the sequence is QAALTPGALTAAAAGTGTQGP. GTP-binding positions include 98 to 105 and 203 to 206; these read GAPGVGKS and NKSD. The tract at residues 278-297 is calmodulin-binding; that stretch reads AKRFLGRIVARNSRKMAFRA.

The protein belongs to the small GTPase superfamily. RGK family. In terms of assembly, interacts with calmodulin preferentially in the inactive, GDP-bound form. Binds CAMKII which is capable of phosphorylating RAD in vitro. Interacts with CAMK2D. Interacts with CACNB2; interaction may be involved in beta-adrenergic regulation of heart rate and contractile force. Interaction with CACNB2 regulates the trafficking of CACNA1C to the cell membrane. In terms of tissue distribution, most abundantly expressed in the heart. Also found in the skeletal muscle and lung. Lesser amounts in placenta and kidney. Also detected in adipose tissue. Overexpressed in muscle of type II diabetic humans.

Its subcellular location is the cell membrane. May regulate basal voltage-dependent L-type Ca(2+) currents and be required for beta-adrenergic augmentation of Ca(2+) influx in cardiomyocytes, thereby regulating increases in heart rate and contractile force. May play an important role in cardiac antiarrhythmia via the strong suppression of voltage-gated L-type Ca(2+) currents. Regulates voltage-dependent L-type calcium channel subunit alpha-1C trafficking to the cell membrane. Inhibits cardiac hypertrophy through the calmodulin-dependent kinase II (CaMKII) pathway. Inhibits phosphorylation and activation of CAMK2D. The chain is GTP-binding protein RAD (RRAD) from Homo sapiens (Human).